Consider the following 114-residue polypeptide: T cell receptor beta variable 4-2 (114 aa).

The signal sequence occupies residues 1–21; that stretch reads MGCRLLCCAVLCLLGAVPMET. The Ig-like domain occupies 22–114; sequence GVTQTPRHLV…SALYLCASSQ (93 aa). The cysteines at positions 42 and 110 are disulfide-linked. Residues Asn-76 and Asn-89 are each glycosylated (N-linked (GlcNAc...) asparagine).

In terms of assembly, alpha-beta TR is a heterodimer composed of an alpha and beta chain; disulfide-linked. The alpha-beta TR is associated with the transmembrane signaling CD3 coreceptor proteins to form the TR-CD3 (TcR or TCR). The assembly of alpha-beta TR heterodimers with CD3 occurs in the endoplasmic reticulum where a single alpha-beta TR heterodimer associates with one CD3D-CD3E heterodimer, one CD3G-CD3E heterodimer and one CD247 homodimer forming a stable octameric structure. CD3D-CD3E and CD3G-CD3E heterodimers preferentially associate with TR alpha and TR beta chains, respectively. The association of the CD247 homodimer is the last step of TcR assembly in the endoplasmic reticulum and is required for transport to the cell surface.

It localises to the cell membrane. Its function is as follows. V region of the variable domain of T cell receptor (TR) beta chain that participates in the antigen recognition. Alpha-beta T cell receptors are antigen specific receptors which are essential to the immune response and are present on the cell surface of T lymphocytes. Recognize peptide-major histocompatibility (MH) (pMH) complexes that are displayed by antigen presenting cells (APC), a prerequisite for efficient T cell adaptive immunity against pathogens. Binding of alpha-beta TR to pMH complex initiates TR-CD3 clustering on the cell surface and intracellular activation of LCK that phosphorylates the ITAM motifs of CD3G, CD3D, CD3E and CD247 enabling the recruitment of ZAP70. In turn ZAP70 phosphorylates LAT, which recruits numerous signaling molecules to form the LAT signalosome. The LAT signalosome propagates signal branching to three major signaling pathways, the calcium, the mitogen-activated protein kinase (MAPK) kinase and the nuclear factor NF-kappa-B (NF-kB) pathways, leading to the mobilization of transcription factors that are critical for gene expression and essential for T cell growth and differentiation. The T cell repertoire is generated in the thymus, by V-(D)-J rearrangement. This repertoire is then shaped by intrathymic selection events to generate a peripheral T cell pool of self-MH restricted, non-autoaggressive T cells. Post-thymic interaction of alpha-beta TR with the pMH complexes shapes TR structural and functional avidity. This chain is T cell receptor beta variable 4-2, found in Homo sapiens (Human).